The primary structure comprises 351 residues: Snurportin-1 (351 aa).

Disordered regions lie at residues 1-66 (MESS…QKGI) and 294-322 (EQKK…EYDS). The segment covering 8 to 42 (LYKKGLDIGEQQKQRQKELLKQQKLRRQQEQDDYR) has biased composition (basic and acidic residues). Basic residues predominate over residues 52-62 (PRKKSGKRSGH). The stretch at 274-330 (VLQYMDAFEQKLAEHRRTLKEQKKKVNEQKEDPHTMEAEEDVESDEYDSLKRVLDQQ) forms a coiled coil. The span at 294–310 (EQKKKVNEQKEDPHTME) shows a compositional bias: basic and acidic residues. Residues 311-320 (AEEDVESDEY) show a composition bias toward acidic residues.

This sequence belongs to the snurportin family. As to quaternary structure, interacts with components of the snRNP complex including SmB and Smn; these interactions are RNA-dependent. Interacts with importin-7 msk but not with importin subunit beta Fs(2)Ket; the interaction is RNA-dependent.

It localises to the nucleus. The protein resides in the cytoplasm. It is found in the U-body. Its subcellular location is the nucleus speckle. The protein localises to the cajal body. Functionally, functions as an U snRNP-specific nuclear import adapter. Involved in the trimethylguanosine (m3G)-cap-dependent nuclear import of U snRNPs. Binds specifically to the terminal m3G-cap U snRNAs. The chain is Snurportin-1 from Drosophila melanogaster (Fruit fly).